We begin with the raw amino-acid sequence, 412 residues long: BSD domain-containing protein 1 (412 aa).

The BSD domain maps to 146-198; the sequence is WLAYWDPEHRKAEISELLVTSPSIRALYTKMVPAAVSHSEFWQRYFYKVHQLE. 2 stretches are compositionally biased toward basic and acidic residues: residues 208–219 and 255–271; these read KQRADQSVHSEE and HVED…RDHT. Disordered regions lie at residues 208–228 and 255–383; these read KQRA…EEED and HVED…EKDF. Residues 272-287 are compositionally biased toward low complexity; the sequence is SITSPSESSESISPIT. A compositionally biased stretch (basic and acidic residues) spans 340–351; that stretch reads THREDPPSDLRV. Positions 355–374 are enriched in polar residues; the sequence is NSDSGKSTPSNNGQKGSSTD.

This is BSD domain-containing protein 1 (bsdc1) from Xenopus tropicalis (Western clawed frog).